We begin with the raw amino-acid sequence, 438 residues long: Histidinol dehydrogenase (438 aa).

The NAD(+) site is built by tyrosine 137, glutamine 198, and asparagine 221. Residues serine 244, glutamine 266, and histidine 269 each coordinate substrate. Zn(2+)-binding residues include glutamine 266 and histidine 269. Active-site proton acceptor residues include glutamate 334 and histidine 335. Substrate contacts are provided by histidine 335, aspartate 368, glutamate 422, and histidine 427. A Zn(2+)-binding site is contributed by aspartate 368. Histidine 427 is a binding site for Zn(2+).

It belongs to the histidinol dehydrogenase family. The cofactor is Zn(2+).

The catalysed reaction is L-histidinol + 2 NAD(+) + H2O = L-histidine + 2 NADH + 3 H(+). It functions in the pathway amino-acid biosynthesis; L-histidine biosynthesis; L-histidine from 5-phospho-alpha-D-ribose 1-diphosphate: step 9/9. Catalyzes the sequential NAD-dependent oxidations of L-histidinol to L-histidinaldehyde and then to L-histidine. This is Histidinol dehydrogenase from Aromatoleum aromaticum (strain DSM 19018 / LMG 30748 / EbN1) (Azoarcus sp. (strain EbN1)).